A 344-amino-acid chain; its full sequence is Phosphate acyltransferase (344 aa).

The protein belongs to the PlsX family. Homodimer. Probably interacts with PlsY.

The protein localises to the cytoplasm. The enzyme catalyses a fatty acyl-[ACP] + phosphate = an acyl phosphate + holo-[ACP]. The protein operates within lipid metabolism; phospholipid metabolism. In terms of biological role, catalyzes the reversible formation of acyl-phosphate (acyl-PO(4)) from acyl-[acyl-carrier-protein] (acyl-ACP). This enzyme utilizes acyl-ACP as fatty acyl donor, but not acyl-CoA. The polypeptide is Phosphate acyltransferase (Cyanothece sp. (strain PCC 7425 / ATCC 29141)).